A 431-amino-acid polypeptide reads, in one-letter code: Glucose-1-phosphate adenylyltransferase (431 aa).

Lys-39 is a beta-D-fructose 1,6-bisphosphate binding site. Arg-40, His-46, and Arg-52 together coordinate AMP. Tyr-114 contacts alpha-D-glucose 1-phosphate. Residue Arg-130 coordinates AMP. Residues Gly-179, 194–195, and Ser-212 contribute to the alpha-D-glucose 1-phosphate site; that span reads EK. Residues Glu-370 and Arg-386 each coordinate AMP. Residues 419-423 and 429-431 contribute to the beta-D-fructose 1,6-bisphosphate site; these read REMLR and QER.

It belongs to the bacterial/plant glucose-1-phosphate adenylyltransferase family. Homotetramer.

It carries out the reaction alpha-D-glucose 1-phosphate + ATP + H(+) = ADP-alpha-D-glucose + diphosphate. It functions in the pathway glycan biosynthesis; glycogen biosynthesis. Its activity is regulated as follows. Allosterically activated by fructose-1,6-bisphosphate (F16BP) and inhibited by AMP. In terms of biological role, involved in the biosynthesis of ADP-glucose, a building block required for the elongation reactions to produce glycogen. Catalyzes the reaction between ATP and alpha-D-glucose 1-phosphate (G1P) to produce pyrophosphate and ADP-Glc. This Salmonella paratyphi C (strain RKS4594) protein is Glucose-1-phosphate adenylyltransferase.